Consider the following 171-residue polypeptide: Protein phosphatase 1 regulatory subunit 1A (171 aa).

Met1 carries the post-translational modification N-acetylmethionine. Positions 1-171 are disordered; that stretch reads MEQDNSPRKI…PLDSKGANSV (171 aa). Positions 9 to 12 are essential for activity; the sequence is KIQF. Residues 19-29 are compositionally biased toward basic and acidic residues; that stretch reads PHLDPEAAEQI. Residue Thr35 is modified to Phosphothreonine; by PKA. The segment at 42–54 is essential for activity; that stretch reads TSDQSSPEIDEDR. A phosphoserine mark is found at Ser43, Ser46, Ser47, and Ser67. Over residues 135-157 the composition is skewed to basic and acidic residues; sequence KTAECIPKTHERGSKEPSTKEPS. Residues 143–171 are interaction with PPP1R15A; it reads THERGSKEPSTKEPSTHIPPLDSKGANSV.

This sequence belongs to the protein phosphatase inhibitor 1 family. As to quaternary structure, interacts with PPP1R15A. Post-translationally, phosphorylation of Thr-35 is required for activity.

Inhibitor of protein-phosphatase 1. This protein may be important in hormonal control of glycogen metabolism. Hormones that elevate intracellular cAMP increase I-1 activity in many tissues. I-1 activation may impose cAMP control over proteins that are not directly phosphorylated by PKA. Following a rise in intracellular calcium, I-1 is inactivated by calcineurin (or PP2B). Does not inhibit type-2 phosphatases. This Homo sapiens (Human) protein is Protein phosphatase 1 regulatory subunit 1A (PPP1R1A).